Here is a 691-residue protein sequence, read N- to C-terminus: Pentatricopeptide repeat-containing protein At5g27110 (691 aa).

PPR repeat units follow at residues D38–R68, D70–V104, D106–C140, D141–R171, D172–P206, N207–L241, D242–K272, S273–P307, S308–A342, D343–D373, V374–P408, D409–T443, D444–K474, D475–P509, D510–K540, and I546–T576. The type E motif stretch occupies residues L582 to S657. The segment at D658–E688 is type E(+) motif.

The protein belongs to the PPR family. PCMP-E subfamily.

The chain is Pentatricopeptide repeat-containing protein At5g27110 (PCMP-E14) from Arabidopsis thaliana (Mouse-ear cress).